Reading from the N-terminus, the 347-residue chain is GMP reductase (347 aa).

An NADP(+)-binding site is contributed by 108 to 131 (ADFVKMQQILALSPGLKFICIDVA). Positions 181 and 183 each coordinate K(+). The active-site Thioimidate intermediate is C186. 216 to 239 (IVSDGGCSVPGDVAKAFGGGADFV) is an NADP(+) binding site.

This sequence belongs to the IMPDH/GMPR family. GuaC type 1 subfamily. As to quaternary structure, homotetramer.

The enzyme catalyses IMP + NH4(+) + NADP(+) = GMP + NADPH + 2 H(+). Its function is as follows. Catalyzes the irreversible NADPH-dependent deamination of GMP to IMP. It functions in the conversion of nucleobase, nucleoside and nucleotide derivatives of G to A nucleotides, and in maintaining the intracellular balance of A and G nucleotides. The protein is GMP reductase of Serratia proteamaculans (strain 568).